The following is a 291-amino-acid chain: Phosphate-binding protein PstS 2 (291 aa).

Positions 1-21 (MKFKKMLTLAAIGLSGFGLVA) are cleaved as a signal peptide. Residue Cys-22 is the site of N-palmitoyl cysteine attachment. Cys-22 carries the S-diacylglycerol cysteine lipid modification.

It belongs to the PstS family. The complex is composed of two ATP-binding proteins (PstB), two transmembrane proteins (PstC and PstA) and a solute-binding protein (PstS).

It localises to the cell membrane. Its function is as follows. Part of the ABC transporter complex PstSACB involved in phosphate import. The polypeptide is Phosphate-binding protein PstS 2 (pstS2) (Streptococcus pneumoniae serotype 4 (strain ATCC BAA-334 / TIGR4)).